The chain runs to 332 residues: Putative ankyrin repeat protein R896 (332 aa).

ANK repeat units lie at residues 159–188 (GNDN…NVKS), 190–218 (DNCA…NVKA), 219–248 (DGNY…DIKA), 249–278 (AQNL…NIST), and 280–308 (NDYV…DIFS).

This Acanthamoeba polyphaga mimivirus (APMV) protein is Putative ankyrin repeat protein R896.